A 130-amino-acid polypeptide reads, in one-letter code: Small ribosomal subunit protein uS9 (130 aa).

Belongs to the universal ribosomal protein uS9 family.

The protein is Small ribosomal subunit protein uS9 of Halalkalibacterium halodurans (strain ATCC BAA-125 / DSM 18197 / FERM 7344 / JCM 9153 / C-125) (Bacillus halodurans).